The sequence spans 310 residues: Putative S-adenosyl-L-methionine-dependent methyltransferase Franean1_4929 (310 aa).

The interval Met1–Val28 is disordered. Residues Gly9–Gly24 show a composition bias toward basic and acidic residues. S-adenosyl-L-methionine is bound by residues Asp136 and Asp165–Leu166.

The protein belongs to the UPF0677 family.

Functionally, exhibits S-adenosyl-L-methionine-dependent methyltransferase activity. In Parafrankia sp. (strain EAN1pec), this protein is Putative S-adenosyl-L-methionine-dependent methyltransferase Franean1_4929.